The sequence spans 142 residues: Large ribosomal subunit protein uL13 (142 aa).

Belongs to the universal ribosomal protein uL13 family. In terms of assembly, part of the 50S ribosomal subunit.

This protein is one of the early assembly proteins of the 50S ribosomal subunit, although it is not seen to bind rRNA by itself. It is important during the early stages of 50S assembly. The polypeptide is Large ribosomal subunit protein uL13 (Pseudomonas entomophila (strain L48)).